The following is a 273-amino-acid chain: Vacuolar membrane protein YPL162C (273 aa).

Residues methionine 1 to leucine 13 lie on the Vacuolar side of the membrane. Residues glycine 14–valine 34 traverse the membrane as a helical segment. Over lysine 35–aspartate 51 the chain is Cytoplasmic. The chain crosses the membrane as a helical span at residues isoleucine 52 to leucine 72. Topologically, residues lysine 73–phenylalanine 97 are vacuolar. Residues leucine 98 to isoleucine 118 form a helical membrane-spanning segment. The Cytoplasmic portion of the chain corresponds to glutamate 119–glutamine 156. Residues leucine 157 to tyrosine 177 traverse the membrane as a helical segment. At leucine 178–asparagine 198 the chain is on the vacuolar side. Residues phenylalanine 199–cysteine 219 traverse the membrane as a helical segment. Over valine 220 to isoleucine 273 the chain is Cytoplasmic.

The protein resides in the vacuole membrane. The sequence is that of Vacuolar membrane protein YPL162C from Saccharomyces cerevisiae (strain ATCC 204508 / S288c) (Baker's yeast).